Consider the following 425-residue polypeptide: MLDPNSRYVSRLTRDTVALVLAGGRGSRLHELTDWRAKPALHFGGKFRIIDFPLSNCVNSGIRRIGILTQYKAHSLIRHVIRGWSSFKKEFGEYVEILPASQRYSPNWYQGTADAIYQNLDILQAEAPKYILVLSGDHVYQMDYGAIIAHHVETGADLTVSCIEVPIEEAAGSFGVMTVDDDNRIIRFDEKPQRPTELANKPGYTLASMGNYVFNTEFLFDQLRKDAADPDSEHDFGKNIIPNIIAEKLVSAYRFRDHDTNETAYWRDVGTLDSFWEANMELVSPNPSLNLYNHDWPIWTYQTQLPPAKFVFDDDSRRGYAVDSMVSGGCIVSGGKVKSSLLFSDVHIHSYAEIEESVLLPEVEVHRSAKIKKAIIDSACVIPEGMIIGHDHEHDKARGFRVTKKGVTLVTREMLGQQPAGTSAK.

Residues Tyr-109, Gly-175, 190-191 (EK), and Ser-208 contribute to the alpha-D-glucose 1-phosphate site.

This sequence belongs to the bacterial/plant glucose-1-phosphate adenylyltransferase family. As to quaternary structure, homotetramer.

The catalysed reaction is alpha-D-glucose 1-phosphate + ATP + H(+) = ADP-alpha-D-glucose + diphosphate. The protein operates within glycan biosynthesis; glycogen biosynthesis. Functionally, involved in the biosynthesis of ADP-glucose, a building block required for the elongation reactions to produce glycogen. Catalyzes the reaction between ATP and alpha-D-glucose 1-phosphate (G1P) to produce pyrophosphate and ADP-Glc. This Saccharophagus degradans (strain 2-40 / ATCC 43961 / DSM 17024) protein is Glucose-1-phosphate adenylyltransferase.